A 156-amino-acid polypeptide reads, in one-letter code: S-ribosylhomocysteine lyase (156 aa).

Fe cation contacts are provided by H56, H60, and C123.

Belongs to the LuxS family. As to quaternary structure, homodimer. Fe cation serves as cofactor.

The enzyme catalyses S-(5-deoxy-D-ribos-5-yl)-L-homocysteine = (S)-4,5-dihydroxypentane-2,3-dione + L-homocysteine. In terms of biological role, involved in the synthesis of autoinducer 2 (AI-2) which is secreted by bacteria and is used to communicate both the cell density and the metabolic potential of the environment. The regulation of gene expression in response to changes in cell density is called quorum sensing. Catalyzes the transformation of S-ribosylhomocysteine (RHC) to homocysteine (HC) and 4,5-dihydroxy-2,3-pentadione (DPD). The protein is S-ribosylhomocysteine lyase of Staphylococcus epidermidis (strain ATCC 35984 / DSM 28319 / BCRC 17069 / CCUG 31568 / BM 3577 / RP62A).